The primary structure comprises 307 residues: Aspartate carbamoyltransferase catalytic subunit (307 aa).

2 residues coordinate carbamoyl phosphate: R54 and T55. Residue K83 coordinates L-aspartate. Carbamoyl phosphate-binding residues include R104, H132, and Q135. L-aspartate-binding residues include R165 and R228. Carbamoyl phosphate-binding residues include L267 and P268.

It belongs to the aspartate/ornithine carbamoyltransferase superfamily. ATCase family. Heterododecamer (2C3:3R2) of six catalytic PyrB chains organized as two trimers (C3), and six regulatory PyrI chains organized as three dimers (R2).

It carries out the reaction carbamoyl phosphate + L-aspartate = N-carbamoyl-L-aspartate + phosphate + H(+). It functions in the pathway pyrimidine metabolism; UMP biosynthesis via de novo pathway; (S)-dihydroorotate from bicarbonate: step 2/3. Functionally, catalyzes the condensation of carbamoyl phosphate and aspartate to form carbamoyl aspartate and inorganic phosphate, the committed step in the de novo pyrimidine nucleotide biosynthesis pathway. The protein is Aspartate carbamoyltransferase catalytic subunit of Clostridium botulinum (strain ATCC 19397 / Type A).